Reading from the N-terminus, the 367-residue chain is DNA replication and repair protein RecF (367 aa).

30–37 (GANGSGKT) is a binding site for ATP.

It belongs to the RecF family.

It localises to the cytoplasm. Functionally, the RecF protein is involved in DNA metabolism; it is required for DNA replication and normal SOS inducibility. RecF binds preferentially to single-stranded, linear DNA. It also seems to bind ATP. This Pseudomonas syringae pv. tomato (strain ATCC BAA-871 / DC3000) protein is DNA replication and repair protein RecF.